A 394-amino-acid chain; its full sequence is Cystathionine gamma-lyase (394 aa).

Positions 37–56 (KQSSPANPIGTYEYSRSQNP) are disordered. 3 residues coordinate substrate: arginine 52, tyrosine 104, and arginine 109. N6-(pyridoxal phosphate)lysine is present on lysine 204. Position 334 (glutamate 334) interacts with substrate. Serine 362 bears the Phosphoserine mark.

This sequence belongs to the trans-sulfuration enzymes family. In terms of assembly, homotetramer. Pyridoxal 5'-phosphate is required as a cofactor.

It localises to the cytoplasm. The enzyme catalyses L,L-cystathionine + H2O = 2-oxobutanoate + L-cysteine + NH4(+). It functions in the pathway amino-acid biosynthesis; L-cysteine biosynthesis; L-cysteine from L-homocysteine and L-serine: step 2/2. Functionally, catalyzes the production of cysteine from cystathionine in the reverse transsulfuration pathway for the biosynthesis of sulfur-containing amino acids cysteine and methionine. In this pathway, homocysteine sulfur is converted to cysteine sulfur. Also has cystathionine beta-lyase and cystathionine gamma-synthase activities in vitro. Cystathionine beta-lyase may be physiological, while cystathionine gamma-synthase activity is not, as the required substrate O-succinyl-L-homoserine(OSH) does not occur naturally in S.cerevisiae. The protein is Cystathionine gamma-lyase of Saccharomyces cerevisiae (strain ATCC 204508 / S288c) (Baker's yeast).